Here is an 869-residue protein sequence, read N- to C-terminus: Alanine--tRNA ligase (869 aa).

The Zn(2+) site is built by His-559, His-563, Cys-660, and His-664.

This sequence belongs to the class-II aminoacyl-tRNA synthetase family. Zn(2+) serves as cofactor.

It is found in the cytoplasm. It carries out the reaction tRNA(Ala) + L-alanine + ATP = L-alanyl-tRNA(Ala) + AMP + diphosphate. In terms of biological role, catalyzes the attachment of alanine to tRNA(Ala) in a two-step reaction: alanine is first activated by ATP to form Ala-AMP and then transferred to the acceptor end of tRNA(Ala). Also edits incorrectly charged Ser-tRNA(Ala) and Gly-tRNA(Ala) via its editing domain. The protein is Alanine--tRNA ligase of Herminiimonas arsenicoxydans.